The primary structure comprises 116 residues: Large ribosomal subunit protein uL18 (116 aa).

It belongs to the universal ribosomal protein uL18 family. As to quaternary structure, part of the 50S ribosomal subunit; part of the 5S rRNA/L5/L18/L25 subcomplex. Contacts the 5S and 23S rRNAs.

In terms of biological role, this is one of the proteins that bind and probably mediate the attachment of the 5S RNA into the large ribosomal subunit, where it forms part of the central protuberance. The polypeptide is Large ribosomal subunit protein uL18 (Shewanella denitrificans (strain OS217 / ATCC BAA-1090 / DSM 15013)).